The chain runs to 347 residues: F-box protein At2g14500 (347 aa).

The region spanning P6–I52 is the F-box domain.

This is F-box protein At2g14500 from Arabidopsis thaliana (Mouse-ear cress).